A 393-amino-acid polypeptide reads, in one-letter code: Cytochrome b (393 aa).

4 consecutive transmembrane segments (helical) span residues Phe-38–Met-58, Trp-82–Phe-104, Val-119–Val-139, and Phe-185–Ala-205. Residues His-88 and His-102 each coordinate heme b. The heme b site is built by His-189 and His-203. His-208 is a binding site for a ubiquinone. 4 helical membrane passes run Phe-231–Phe-251, Val-295–Lys-315, Ile-327–Cys-347, and Phe-354–Pro-373.

The protein belongs to the cytochrome b family. The main subunits of complex b-c1 are: cytochrome b, cytochrome c1 and the Rieske protein. It depends on heme b as a cofactor. In terms of processing, first mitochondrial-encoded protein to be shown to have its N-terminal methionine cleaved off.

It localises to the mitochondrion inner membrane. In terms of biological role, component of the ubiquinol-cytochrome c reductase complex (complex III or cytochrome b-c1 complex) that is part of the mitochondrial respiratory chain. The b-c1 complex mediates electron transfer from ubiquinol to cytochrome c. Contributes to the generation of a proton gradient across the mitochondrial membrane that is then used for ATP synthesis. This Solanum tuberosum (Potato) protein is Cytochrome b (MT-CYB).